The chain runs to 327 residues: Glycerol-3-phosphate dehydrogenase [NAD(P)+] (327 aa).

NADPH contacts are provided by Phe13, Arg34, and Lys107. Sn-glycerol 3-phosphate is bound by residues Lys107 and Gly135. Ala139 is an NADPH binding site. The sn-glycerol 3-phosphate site is built by Lys190, Asp243, Ser253, Arg254, and Asn255. Lys190 functions as the Proton acceptor in the catalytic mechanism. Position 254 (Arg254) interacts with NADPH. NADPH is bound by residues Val276 and Glu277.

Belongs to the NAD-dependent glycerol-3-phosphate dehydrogenase family.

It is found in the cytoplasm. The catalysed reaction is sn-glycerol 3-phosphate + NAD(+) = dihydroxyacetone phosphate + NADH + H(+). It carries out the reaction sn-glycerol 3-phosphate + NADP(+) = dihydroxyacetone phosphate + NADPH + H(+). It participates in membrane lipid metabolism; glycerophospholipid metabolism. Catalyzes the reduction of the glycolytic intermediate dihydroxyacetone phosphate (DHAP) to sn-glycerol 3-phosphate (G3P), the key precursor for phospholipid synthesis. In Rhizobium etli (strain ATCC 51251 / DSM 11541 / JCM 21823 / NBRC 15573 / CFN 42), this protein is Glycerol-3-phosphate dehydrogenase [NAD(P)+].